Consider the following 182-residue polypeptide: MFKYIGDIVKGTGTQLRSMVMVFGHGFRKRDTLQYPEEQVYLPPRYRGRIVLTRDPDGEERCVACNLCAVACPVGCISLQKAETEDGRWYPDFFRINFSRCIFCGLCEEACPTTAIQLTPDFEMAEFKRQDLVYEKEDLLISGPGKNPDYNFYRVAGMAIGGKPKGSAQNEAEPINVKSLLP.

2 4Fe-4S ferredoxin-type domains span residues leucine 52 to alanine 82 and aspartate 92 to aspartate 121. [4Fe-4S] cluster is bound by residues cysteine 62, cysteine 65, cysteine 68, cysteine 72, cysteine 101, cysteine 104, cysteine 107, and cysteine 111.

It belongs to the complex I 23 kDa subunit family. In terms of assembly, NDH-1 is composed of 13 different subunits. Subunits NuoA, H, J, K, L, M, N constitute the membrane sector of the complex. Requires [4Fe-4S] cluster as cofactor.

The protein resides in the cell inner membrane. It catalyses the reaction a quinone + NADH + 5 H(+)(in) = a quinol + NAD(+) + 4 H(+)(out). NDH-1 shuttles electrons from NADH, via FMN and iron-sulfur (Fe-S) centers, to quinones in the respiratory chain. The immediate electron acceptor for the enzyme in this species is believed to be ubiquinone. Couples the redox reaction to proton translocation (for every two electrons transferred, four hydrogen ions are translocated across the cytoplasmic membrane), and thus conserves the redox energy in a proton gradient. This is NADH-quinone oxidoreductase subunit I from Pseudomonas syringae pv. syringae (strain B728a).